Reading from the N-terminus, the 79-residue chain is Hematopoietic cell signal transducer (79 aa).

An N-terminal signal peptide occupies residues 1–18 (MVPPGNILFLLLLPVATA). Over 19-35 (QMTPGSCSGCGPLSLPL) the chain is Extracellular. A helical membrane pass occupies residues 36–56 (LAGLVAADAVVSLLIVVVVFV). Topologically, residues 57 to 79 (CARLRSRPTQEDDKIYINMPGRG) are cytoplasmic. Tyr-72 bears the Phosphotyrosine mark. A GRB2 binding site region spans residues 72–74 (YIN). The interval 72–75 (YINM) is PIK3R1 binding site.

It belongs to the DAP10 family. Homodimer; Disulfide-linked. Heterohexamer composed of four subunits of HCST/DAP10 and two subunits of KLRK1. Interacts (via transmembrane domain) with KLRK1 (via transmembrane domain); the interaction is required for KLRK1 NK cell surface and induces NK cell-mediated cytotoxicity. Interacts with PIK3R1 and GRB2. Interacts with CLEC5A. Forms an CLEC5A/TYROBP/HCST trimolecular complex depending almost solely on TYROBP. Interacts with KLRK1. Interacts with CD300H. Phosphorylated; PIK3R1 and GRB2 associate specifically with tyrosine-phosphorylated HCST. In terms of processing, O-glycosylated.

The protein resides in the membrane. Its function is as follows. Transmembrane adapter protein which associates with KLRK1 to form an activation receptor KLRK1-HCST in lymphoid and myeloid cells; this receptor plays a major role in triggering cytotoxicity against target cells expressing cell surface ligands such as MHC class I chain-related MICA and MICB, and UL16-binding proteins (ULBPs); these ligands are up-regulated by stress conditions and pathological state such as viral infection and tumor transformation. Functions as a docking site for PI3-kinase PIK3R1 and GRB2. Interaction of ULBPs with KLRK1-HCST triggers calcium mobilization and activation of the PIK3R1, MAP2K/ERK, and JAK2/STAT5 signaling pathways. Both PIK3R1 and GRB2 are required for full KLRK1-HCST-mediated activation and ultimate killing of target cells. In NK cells, KLRK1-HCST signaling directly induces cytotoxicity and enhances cytokine production initiated via DAP12/TYROBP-associated receptors. In T-cells, it provides primarily costimulation for TCR-induced signals. KLRK1-HCST receptor plays a role in immune surveillance against tumors and is required for cytolysis of tumors cells; indeed, melanoma cells that do not express KLRK1 ligands escape from immune surveillance mediated by NK cells. The sequence is that of Hematopoietic cell signal transducer (HCST) from Bos taurus (Bovine).